The chain runs to 1360 residues: TRAF2 and NCK-interacting protein kinase (1360 aa).

The Protein kinase domain maps to 25–289; it reads FELVELVGNG…TEQLMKHPFI (265 aa). Residues 31 to 39 and K54 each bind ATP; that span reads VGNGTYGQV. The active-site Proton acceptor is D153. A Phosphothreonine modification is found at T187. Disordered regions lie at residues 284 to 347, 398 to 440, and 539 to 589; these read MKHP…LPGE, QKEQ…RRRA, and ERSR…RPVD. The segment covering 288–307 has biased composition (basic and acidic residues); that stretch reads FIRDQPNERQVRIQLKDHID. Positions 290 to 1047 are mediates interaction with NEDD4; that stretch reads RDQPNERQVR…EIRKYKKRFN (758 aa). Positions 317–335 are enriched in acidic residues; the sequence is DETEYEYSGSEEEEEENDS. Residues S324 and S326 each carry the phosphoserine modification. Residues S560 and S570 each carry the phosphoserine modification. T581 carries the phosphothreonine modification. A phosphoserine mark is found at S600, S608, S610, and S640. Disordered regions lie at residues 601–801, 814–878, 908–927, and 933–998; these read QGPA…KAID, LRIE…YNVG, TSGE…AGHI, and VQQS…ESSA. Over residues 652–669 the composition is skewed to basic and acidic residues; it reads RIEKFDRSSWLRQEEDIP. 9 positions are modified to phosphoserine: S678, S680, S688, S701, S707, S720, S764, S766, and S769. The span at 720 to 755 shows a compositional bias: low complexity; it reads SPLQRTSSGSSSSSSTPSSQPSSQGGSQPGSQAGSS. Basic and acidic residues-rich tracts occupy residues 775-789 and 814-827; these read EPAK…DITR and LRIE…KKVT. Acidic residues predominate over residues 834-847; sequence EESESSEEEEEDGE. Residues 908–917 are compositionally biased toward basic and acidic residues; that stretch reads TSGEKKRSGH. Position 959 is a phosphoserine (S959). Positions 987–996 are enriched in acidic residues; it reads TDEDEEDEES. Residues 1047–1334 enclose the CNH domain; it reads NSEILCAALW…KFLCERNDKV (288 aa).

This sequence belongs to the protein kinase superfamily. STE Ser/Thr protein kinase family. STE20 subfamily. As to quaternary structure, interacts (via the CNH domain) with RAP2A (GTP-bound form preferentially); the interaction is direct and required for the activation of TNIK by RAP2A. Interacts with NEDD4; recruits RAP2A to NEDD4. Interacts with TRAF2 and NCK. Interacts with TCF7L2/TCF4 and CTNNB1; the interaction is direct. Interacts with TANC1. Autophosphorylated. Autophosphorylation is activated by RAP2A and induces association to the cytoskeletal fraction. As to expression, expressed ubiquitously. Highest levels observed in heart, brain and skeletal muscle. Expressed in normal colonic epithelia and colorectal cancer tissues.

It is found in the nucleus. It localises to the cytoplasm. Its subcellular location is the recycling endosome. The protein localises to the cytoskeleton. It carries out the reaction L-seryl-[protein] + ATP = O-phospho-L-seryl-[protein] + ADP + H(+). The catalysed reaction is L-threonyl-[protein] + ATP = O-phospho-L-threonyl-[protein] + ADP + H(+). Functionally, serine/threonine kinase that acts as an essential activator of the Wnt signaling pathway. Recruited to promoters of Wnt target genes and required to activate their expression. May act by phosphorylating TCF4/TCF7L2. Appears to act upstream of the JUN N-terminal pathway. May play a role in the response to environmental stress. Part of a signaling complex composed of NEDD4, RAP2A and TNIK which regulates neuronal dendrite extension and arborization during development. More generally, it may play a role in cytoskeletal rearrangements and regulate cell spreading. Phosphorylates SMAD1 on Thr-322. Activator of the Hippo signaling pathway which plays a pivotal role in organ size control and tumor suppression by restricting proliferation and promoting apoptosis. MAP4Ks act in parallel to and are partially redundant with STK3/MST2 and STK4/MST2 in the phosphorylation and activation of LATS1/2, and establish MAP4Ks as components of the expanded Hippo pathway. This chain is TRAF2 and NCK-interacting protein kinase, found in Homo sapiens (Human).